Reading from the N-terminus, the 419-residue chain is MNLTALKNIPVSELIFLGDNAGLENLARMRKQDIIFSILKQHAKSGEDIFGDGVLEILQDGFGFLRSSDSSYLAGPDDIYVSPSQIRRFNLRTGDTISGKIRPPKEGERYFALLKVNKVNYDKPENARSKILFENLTPLHANSRLRMERGNGSTEDLTARVLDLASPIGRGQRGLIVAPPKAGKTMLLQNIAQSIAYNHPDCVLMVLLIDERPEEVTEMRRLVKGEVVASTFDEPSSRHVQVSEMVIEKAKRLVEHKKDVIILLDSITRLARAYNTVVPASGKVLTGGVDANALHRPKRFFGAARNVEEGGSLTIIATALIDTGSKMDEVIYEEFKGTGNMELPLSRKIAEKRVFPAIDYNRSGTRKEELLTKSDELQKMWILRKIIHPMSEIDAMEFLINKLAMTKTNNEFFDMMKRS.

The 76-residue stretch at 48–123 folds into the Rho RNA-BD domain; the sequence is DIFGDGVLEI…LKVNKVNYDK (76 aa). RNA-binding regions lie at residues 61–66, 78–80, and 108–110; these read GFGFLR, DIY, and ERY. ATP contacts are provided by residues 169–174, 181–186, and Arg-212; these read GRGQRG and KAGKTM. The segment at 284 to 288 is RNA-binding 2; sequence VLTGG.

Belongs to the Rho family. As to quaternary structure, homohexamer. The homohexamer assembles into an open ring structure.

Functionally, facilitates transcription termination by a mechanism that involves Rho binding to the nascent RNA, activation of Rho's RNA-dependent ATPase activity, and release of the mRNA from the DNA template. This Buchnera aphidicola subsp. Baizongia pistaciae (strain Bp) protein is Transcription termination factor Rho.